The primary structure comprises 374 residues: Beta sliding clamp (374 aa).

This sequence belongs to the beta sliding clamp family. Forms a ring-shaped head-to-tail homodimer around DNA which binds and tethers DNA polymerases and other proteins to the DNA. The DNA replisome complex has a single clamp-loading complex (3 tau and 1 each of delta, delta', psi and chi subunits) which binds 3 Pol III cores (1 core on the leading strand and 2 on the lagging strand) each with a beta sliding clamp dimer. Additional proteins in the replisome are other copies of gamma, psi and chi, Ssb, DNA helicase and RNA primase.

Its subcellular location is the cytoplasm. Confers DNA tethering and processivity to DNA polymerases and other proteins. Acts as a clamp, forming a ring around DNA (a reaction catalyzed by the clamp-loading complex) which diffuses in an ATP-independent manner freely and bidirectionally along dsDNA. Initially characterized for its ability to contact the catalytic subunit of DNA polymerase III (Pol III), a complex, multichain enzyme responsible for most of the replicative synthesis in bacteria; Pol III exhibits 3'-5' exonuclease proofreading activity. The beta chain is required for initiation of replication as well as for processivity of DNA replication. The sequence is that of Beta sliding clamp (dnaN) from Helicobacter pylori (strain J99 / ATCC 700824) (Campylobacter pylori J99).